Reading from the N-terminus, the 342-residue chain is C-X-C chemokine receptor type 6 (342 aa).

At M1–V32 the chain is on the extracellular side. N16 carries an N-linked (GlcNAc...) asparagine glycan. The helical transmembrane segment at F33–Y59 threads the bilayer. The Cytoplasmic segment spans residues H60–V68. The helical transmembrane segment at F69–Y89 threads the bilayer. At A90–K103 the chain is on the extracellular side. Residues C102 and C180 are joined by a disulfide bond. A helical membrane pass occupies residues T104–V125. Over D126–K143 the chain is Cytoplasmic. A helical transmembrane segment spans residues K144 to L164. Topologically, residues P165–I187 are extracellular. Residues S188 to I215 form a helical membrane-spanning segment. Residues K216–K231 lie on the Cytoplasmic side of the membrane. A helical membrane pass occupies residues I232–E259. Topologically, residues Y260–A275 are extracellular. A helical transmembrane segment spans residues I276–L293. At K294–L342 the chain is on the cytoplasmic side.

Belongs to the G-protein coupled receptor 1 family.

It localises to the cell membrane. Functionally, receptor for the C-X-C chemokine CXCL16. Used as a coreceptor by SIVs and by strains of HIV-2 and m-tropic HIV-1. This chain is C-X-C chemokine receptor type 6 (CXCR6), found in Chlorocebus aethiops (Green monkey).